We begin with the raw amino-acid sequence, 575 residues long: Alpha-(1,6)-fucosyltransferase (575 aa).

Residues 1 to 9 (MRPWTGSWR) are Cytoplasmic-facing. A helical; Signal-anchor for type II membrane protein membrane pass occupies residues 10-30 (WIMLILFAWGTLLFYIGGHLV). Residues 31 to 575 (RDNDHSDHSS…KYPTYPEADK (545 aa)) lie on the Lumenal side of the membrane. Disulfide bonds link Cys204-Cys266, Cys212-Cys230, and Cys218-Cys222. Residues 206 to 493 (KAKKLVCNIN…PDASANFRSL (288 aa)) form the GT23 domain. The residue at position 278 (Ser278) is a Phosphoserine. The SH3-binding signature appears at 299 to 305 (PRPPYLP). The segment at 365–366 (RR) is important for donor substrate binding. A disulfide bridge connects residues Cys465 and Cys472. One can recognise an SH3 domain in the interval 502–563 (PNAHNQIAIY…PSYKVREKIE (62 aa)).

It belongs to the glycosyltransferase 23 family. In terms of processing, tyrosine phosphorylated by PKDCC/VLK. Highest expression in brain.

The protein localises to the golgi apparatus. It is found in the golgi stack membrane. The catalysed reaction is N(4)-{beta-D-GlcNAc-(1-&gt;2)-alpha-D-Man-(1-&gt;3)-[beta-D-GlcNAc-(1-&gt;2)-alpha-D-Man-(1-&gt;6)]-beta-D-Man-(1-&gt;4)-beta-D-GlcNAc-(1-&gt;4)-beta-D-GlcNAc}-L-asparaginyl-[protein] + GDP-beta-L-fucose = an N(4)-{beta-D-GlcNAc-(1-&gt;2)-alpha-D-Man-(1-&gt;3)-[beta-D-GlcNAc-(1-&gt;2)-alpha-D-Man-(1-&gt;6)]-beta-D-Man-(1-&gt;4)-beta-D-GlcNAc-(1-&gt;4)-[alpha-L-Fuc-(1-&gt;6)]-beta-D-GlcNAc}-L-asparaginyl-[protein] + GDP + H(+). It participates in protein modification; protein glycosylation. In terms of biological role, catalyzes the addition of fucose in alpha 1-6 linkage to the first GlcNAc residue, next to the peptide chains in N-glycans. This Sus scrofa (Pig) protein is Alpha-(1,6)-fucosyltransferase (FUT8).